We begin with the raw amino-acid sequence, 284 residues long: MEMO1 family protein MMP1387 (284 aa).

This sequence belongs to the MEMO1 family.

This is MEMO1 family protein MMP1387 from Methanococcus maripaludis (strain DSM 14266 / JCM 13030 / NBRC 101832 / S2 / LL).